The primary structure comprises 557 residues: Acetylcholine receptor subunit alpha-L1 (557 aa).

A signal peptide spans 1-23; sequence MAAALPPMLLLLLLLLLHHPAAA. Topologically, residues 24-244 are extracellular; the sequence is NPDAKRLYDD…NITLRRKTLF (221 aa). Residue Asn47 is glycosylated (N-linked (GlcNAc...) asparagine). 2 disulfide bridges follow: Cys151/Cys165 and Cys224/Cys225. Asn235 carries an N-linked (GlcNAc...) asparagine glycan. Transmembrane regions (helical) follow at residues 245–266, 274–294, and 308–329; these read YTVN…VFYL, IALC…ISEI, and YLLF…VLNV. Residues 330 to 500 are Cytoplasmic-facing; the sequence is HYRKPSTHKM…EFDAEDQDWG (171 aa). The chain crosses the membrane as a helical span at residues 501 to 523; sequence FVAMVLDRLFLWIFTIASIVGTF.

It belongs to the ligand-gated ion channel (TC 1.A.9) family. Acetylcholine receptor (TC 1.A.9.1) subfamily.

It is found in the postsynaptic cell membrane. It localises to the cell membrane. After binding acetylcholine, the AChR responds by an extensive change in conformation that affects all subunits and leads to opening of an ion-conducting channel across the plasma membrane. The sequence is that of Acetylcholine receptor subunit alpha-L1 from Schistocerca gregaria (Desert locust).